The chain runs to 319 residues: Acetyl-coenzyme A carboxylase carboxyl transferase subunit alpha (319 aa).

A CoA carboxyltransferase C-terminal domain is found at 39-293 (RLQKKSNDLT…KAVLEKQLHE (255 aa)).

The protein belongs to the AccA family. As to quaternary structure, acetyl-CoA carboxylase is a heterohexamer composed of biotin carboxyl carrier protein (AccB), biotin carboxylase (AccC) and two subunits each of ACCase subunit alpha (AccA) and ACCase subunit beta (AccD).

The protein localises to the cytoplasm. It carries out the reaction N(6)-carboxybiotinyl-L-lysyl-[protein] + acetyl-CoA = N(6)-biotinyl-L-lysyl-[protein] + malonyl-CoA. Its pathway is lipid metabolism; malonyl-CoA biosynthesis; malonyl-CoA from acetyl-CoA: step 1/1. Its function is as follows. Component of the acetyl coenzyme A carboxylase (ACC) complex. First, biotin carboxylase catalyzes the carboxylation of biotin on its carrier protein (BCCP) and then the CO(2) group is transferred by the carboxyltransferase to acetyl-CoA to form malonyl-CoA. This Neisseria meningitidis serogroup A / serotype 4A (strain DSM 15465 / Z2491) protein is Acetyl-coenzyme A carboxylase carboxyl transferase subunit alpha.